The chain runs to 290 residues: ATP synthase gamma chain (290 aa).

It belongs to the ATPase gamma chain family. As to quaternary structure, F-type ATPases have 2 components, CF(1) - the catalytic core - and CF(0) - the membrane proton channel. CF(1) has five subunits: alpha(3), beta(3), gamma(1), delta(1), epsilon(1). CF(0) has three main subunits: a, b and c.

It localises to the cell inner membrane. Its function is as follows. Produces ATP from ADP in the presence of a proton gradient across the membrane. The gamma chain is believed to be important in regulating ATPase activity and the flow of protons through the CF(0) complex. The polypeptide is ATP synthase gamma chain (Paracoccus denitrificans (strain Pd 1222)).